The sequence spans 739 residues: NAD(P)H-quinone oxidoreductase subunit 5, chloroplastic (739 aa).

16 consecutive transmembrane segments (helical) span residues W9–F29, W40–I60, I89–I109, F125–I145, I147–T167, I184–E204, L224–F244, T258–A278, Y289–A311, G318–S338, A354–S374, N396–S416, Y427–F447, L546–F566, V605–P625, and I718–I738.

It belongs to the complex I subunit 5 family. NDH is composed of at least 16 different subunits, 5 of which are encoded in the nucleus.

Its subcellular location is the plastid. It localises to the chloroplast thylakoid membrane. The catalysed reaction is a plastoquinone + NADH + (n+1) H(+)(in) = a plastoquinol + NAD(+) + n H(+)(out). It catalyses the reaction a plastoquinone + NADPH + (n+1) H(+)(in) = a plastoquinol + NADP(+) + n H(+)(out). In terms of biological role, NDH shuttles electrons from NAD(P)H:plastoquinone, via FMN and iron-sulfur (Fe-S) centers, to quinones in the photosynthetic chain and possibly in a chloroplast respiratory chain. The immediate electron acceptor for the enzyme in this species is believed to be plastoquinone. Couples the redox reaction to proton translocation, and thus conserves the redox energy in a proton gradient. This Coffea arabica (Arabian coffee) protein is NAD(P)H-quinone oxidoreductase subunit 5, chloroplastic (ndhF).